A 365-amino-acid chain; its full sequence is Anhydro-N-acetylmuramic acid kinase (365 aa).

9–16 (GTSLDGVD) serves as a coordination point for ATP.

This sequence belongs to the anhydro-N-acetylmuramic acid kinase family.

The enzyme catalyses 1,6-anhydro-N-acetyl-beta-muramate + ATP + H2O = N-acetyl-D-muramate 6-phosphate + ADP + H(+). It participates in amino-sugar metabolism; 1,6-anhydro-N-acetylmuramate degradation. Its pathway is cell wall biogenesis; peptidoglycan recycling. In terms of biological role, catalyzes the specific phosphorylation of 1,6-anhydro-N-acetylmuramic acid (anhMurNAc) with the simultaneous cleavage of the 1,6-anhydro ring, generating MurNAc-6-P. Is required for the utilization of anhMurNAc either imported from the medium or derived from its own cell wall murein, and thus plays a role in cell wall recycling. This is Anhydro-N-acetylmuramic acid kinase from Zymomonas mobilis subsp. mobilis (strain ATCC 31821 / ZM4 / CP4).